A 169-amino-acid polypeptide reads, in one-letter code: Peptide deformylase (169 aa).

The Fe cation site is built by C91 and H133. Residue E134 is part of the active site. H137 serves as a coordination point for Fe cation.

It belongs to the polypeptide deformylase family. Fe(2+) serves as cofactor.

The enzyme catalyses N-terminal N-formyl-L-methionyl-[peptide] + H2O = N-terminal L-methionyl-[peptide] + formate. Removes the formyl group from the N-terminal Met of newly synthesized proteins. Requires at least a dipeptide for an efficient rate of reaction. N-terminal L-methionine is a prerequisite for activity but the enzyme has broad specificity at other positions. The polypeptide is Peptide deformylase (Erwinia tasmaniensis (strain DSM 17950 / CFBP 7177 / CIP 109463 / NCPPB 4357 / Et1/99)).